A 90-amino-acid chain; its full sequence is Albumin (90 aa).

Ser-5 carries the post-translational modification Phosphoserine. Ca(2+) is bound by residues Glu-6 and Asp-13. The region spanning 25–90 is the Albumin domain; the sequence is LLRHLVDEPQ…LVASTQAALA (66 aa). The residue at position 61 (Ser-61) is a Phosphoserine. Residues Thr-62 and Thr-64 each carry the phosphothreonine modification. Position 80 is an N6-methyllysine (Lys-80).

Belongs to the ALB/AFP/VDB family. In terms of assembly, interacts with FCGRT; this interaction regulates ALB homeostasis. Interacts with TASOR. In plasma, occurs in a covalently-linked complex with chromophore-bound alpha-1-microglobulin; this interaction does not prevent fatty acid binding to ALB. In terms of tissue distribution, plasma.

It is found in the secreted. Binds water, Ca(2+), Na(+), K(+), fatty acids, hormones, bilirubin and drugs. Its main function is the regulation of the colloidal osmotic pressure of blood. Major zinc transporter in plasma, typically binds about 80% of all plasma zinc. Major calcium and magnesium transporter in plasma, binds approximately 45% of circulating calcium and magnesium in plasma. Potentially has more than two calcium-binding sites and might additionally bind calcium in a non-specific manner. The shared binding site between zinc and calcium suggests a crosstalk between zinc and calcium transport in the blood. The rank order of affinity is zinc &gt; calcium &gt; magnesium. Binds to the bacterial siderophore enterobactin and inhibits enterobactin-mediated iron uptake of E.coli from ferric transferrin, and may thereby limit the utilization of iron and growth of enteric bacteria such as E.coli. Does not prevent iron uptake by the bacterial siderophore aerobactin. The protein is Albumin of Capra hircus (Goat).